The chain runs to 328 residues: PhoH-like protein (328 aa).

Residue 135-142 (GPAGTGKT) participates in ATP binding.

This sequence belongs to the PhoH family.

It localises to the cytoplasm. This is PhoH-like protein from Synechocystis sp. (strain ATCC 27184 / PCC 6803 / Kazusa).